The chain runs to 161 residues: Lipid droplet assembly factor 1 (161 aa).

The Cytoplasmic portion of the chain corresponds to 1–43 (MAEEEPSSVSRDLQELQRKLGLLLESFQNNSKVVAFMKSPVGR). A helical membrane pass occupies residues 44–61 (FLDRHPFLVLTVLMFVTM). The Lumenal portion of the chain corresponds to 62–67 (SAIPVG). Residues 68-87 (FFLLIVVLTSLGALMGAILL) form a helical membrane-spanning segment. Over 88–93 (EGLVIS) the chain is Cytoplasmic. Residues 94-110 (VCGLSLLCILCGLGFVS) traverse the membrane as a helical segment. Residues 111–116 (LALSGI) lie on the Lumenal side of the membrane. A helical membrane pass occupies residues 117-133 (TMMSYVVVSCLMSYWFS). Topologically, residues 134–161 (PSRPPTQQHANIDSQLAMKFTESEKLGL) are cytoplasmic.

This sequence belongs to the LDAF1 family. As to quaternary structure, interacts with BSCL2/seipin to form an oligomeric complex.

The protein localises to the endoplasmic reticulum membrane. Its subcellular location is the lipid droplet. Its function is as follows. Plays an important role in the formation of lipid droplets (LD) which are storage organelles at the center of lipid and energy homeostasis. In association with BSCL2/seipin, defines the sites of LD formation in the endoplasmic reticulum. This Rattus norvegicus (Rat) protein is Lipid droplet assembly factor 1.